The chain runs to 576 residues: MRTLLPFIRLFKFAKFPLILGLVLMILGLGSSMGLLTVSGWFLAATAIAGLGTLFNFFYPSASVRGLAIGRTVMRYFEKIVTHDATFRILSKLRVQVFEKIIPLSPAVLNRYRNSDLLNRLVSDVDTLDSLYLRLLAPFFTAVFVIIAMMIGLSFINIPLALGLGLFLLILLMIIPTVFYRLGQQFGERLIQARATYRTQFLEFIQAQAELLLFNAEDKLKEKMLVTEKTWQEDQAKEAKLSGFSTALVLFLNGLLISGMLWFASNADFGTDEYHTAYIALFTFAALAAFEIIMPLGAAFLHIGQVIAAAERVTEIIEQKPLVEFNGNEEFETKVRLISAKNLNFSYPEQETLVLKNLTLDLEQGKKIAILGKTGSGKSSLLQLLVRNYDANQGELLLAEKPISAYSEETLRHQICFLTQRVHVFSDTLRQNLQFASADKISDEQMIEMLHQVGLSKLLEQEGKGLNLWLGDGGRPLSGGEQRRLGLARILLNNASILLLDEPTEGLDRETERQILRLILQHAENKTLIIVTHRLSSIEQFDKICVIDNGRLIEEGDYNSLITKENGFFKRLIERV.

A run of 6 helical transmembrane segments spans residues 16 to 36 (FPLI…MGLL), 38 to 58 (VSGW…FNFF), 133 to 153 (LRLL…MIGL), 155 to 175 (FINI…LMII), 244 to 264 (FSTA…LWFA), and 281 to 301 (LFTF…AAFL). The ABC transmembrane type-1 domain maps to 19–308 (ILGLVLMILG…AFLHIGQVIA (290 aa)). The ABC transporter domain occupies 338 to 574 (ISAKNLNFSY…ENGFFKRLIE (237 aa)). ATP is bound at residue 372–379 (GKTGSGKS).

The protein belongs to the ABC transporter superfamily. Cysteine exporter (TC 3.A.1.129.1) family. In terms of assembly, forms a heterodimer with CydD.

Its subcellular location is the cell inner membrane. The catalysed reaction is L-cysteine(in) + ATP + H2O = L-cysteine(out) + ADP + phosphate + H(+). It carries out the reaction glutathione(in) + ATP + H2O = glutathione(out) + ADP + phosphate + H(+). In terms of biological role, part of the ABC transporter complex CydDC that exports the reduced low-molecular-weight thiols cysteine and glutathione to the periplasm. Export of these thiol-containing redox-active molecules may be crucial for redox homeostasis in the periplasm, permitting correct assembly of various respiratory complexes and formation of correct disulfide bonds in periplasmic and secreted proteins. CydC contains transmembrane domains (TMD), which form a pore in the inner membrane, and an ATP-binding domain (NBD), which is responsible for energy generation. Required for the assembly of functional cytochrome bd-type quinol oxidases and periplasmic c-type cytochromes. The sequence is that of Glutathione/L-cysteine transport system ATP-binding/permease protein CydC (cydC) from Haemophilus influenzae (strain ATCC 51907 / DSM 11121 / KW20 / Rd).